Reading from the N-terminus, the 156-residue chain is Ribonuclease pancreatic (156 aa).

A signal peptide spans 1–28 (MALEKSLALLPLLVLVLLVLGWVQPSLG). Basic and acidic residues predominate over residues 33 to 43 (AKKFQRQHMDS). Residues 33 to 52 (AKKFQRQHMDSDGSPSSNPT) are disordered. Substrate contacts are provided by Lys-35 and Arg-38. The active-site Proton acceptor is the His-40. 4 cysteine pairs are disulfide-bonded: Cys-54–Cys-112, Cys-68–Cys-123, Cys-86–Cys-138, and Cys-93–Cys-100. Asn-62 carries N-linked (GlcNAc...) asparagine glycosylation. Residue 69–73 (KPVNT) coordinates substrate. A glycan (N-linked (GlcNAc...) asparagine) is linked at Asn-90. 2 residues coordinate substrate: Lys-94 and Arg-113. N-linked (GlcNAc...) asparagine glycosylation is present at Asn-116. His-147 (proton donor) is an active-site residue.

The protein belongs to the pancreatic ribonuclease family. As to quaternary structure, monomer. Interacts with and forms tight 1:1 complexes with RNH1. Dimerization of two such complexes may occur. Interaction with RNH1 inhibits this protein.

The protein localises to the secreted. The enzyme catalyses an [RNA] containing cytidine + H2O = an [RNA]-3'-cytidine-3'-phosphate + a 5'-hydroxy-ribonucleotide-3'-[RNA].. It catalyses the reaction an [RNA] containing uridine + H2O = an [RNA]-3'-uridine-3'-phosphate + a 5'-hydroxy-ribonucleotide-3'-[RNA].. Its function is as follows. Endonuclease that catalyzes the cleavage of RNA on the 3' side of pyrimidine nucleotides. Acts on single-stranded and double-stranded RNA. This is Ribonuclease pancreatic (RNASE1) from Ateles geoffroyi (Black-handed spider monkey).